The primary structure comprises 188 residues: Epididymal-specific lipocalin-5 (188 aa).

A signal peptide spans 1-19 (MENIMPFALLGLCVGLAAG). A disulfide bridge connects residues Cys82 and Cys176.

The protein belongs to the calycin superfamily. Lipocalin family. There are two similar, immunologically cross-reacting forms of this protein, designated B and C, which probably result from different processing of the amino end. Post-translationally, the N-terminus of form C is probably blocked. In terms of tissue distribution, synthesized exclusively in the proximal part (caput epididymidis) of the epididymis. It makes up a substantial part of the total protein in the epididymal luminal fluid and binds to the sperm membrane.

The protein resides in the secreted. In terms of biological role, associates with spermatozoa in the epididymal fluid but does not bind tightly to them. Binds both all-trans and 9-cis retinoic acid. May act as a retinoid carrier protein which is required for epididymal function and/or sperm maturation. The sequence is that of Epididymal-specific lipocalin-5 (Lcn5) from Rattus norvegicus (Rat).